Here is a 411-residue protein sequence, read N- to C-terminus: MPKKFGRIHLVVMDSVGIGAAPDADKFFNHDVETHEAINDVNSDTIGHISEIRGLDVPNLQKLGWGNIPRESPLKTVPKADKPAAYVTKLEEISKGKDTMTGHWEIMGLNIQTPFPTYPEGYPEDLLEKIEEFSGRKIIREANKPYSGTAVIEDFGPRQLETGELIIYTSADPVLQIAAHEDVISREELYKICEYVRSITLEGSGIMIGRIIARPYVGEAGNFERTDGRRDYALSPFAETVLEKLYKAGIDTYSVGKISDIFNTVGVKYDMGHNHNDMDGVDRLLKAMTKAEFTEGFSFTNLVDFDAKYGHRRDVEGYGKAIEDFDGRLPEIIDVMKEDDLLMITADHGNDPSYVGTDHTREYIPLVIFSKSLKDPKVLPVGHFADISATVAENFSVKKAQTGESFLDALV.

6 residues coordinate Mn(2+): Asp-14, Asp-306, His-311, Asp-347, His-348, and His-359.

This sequence belongs to the phosphopentomutase family. Mn(2+) serves as cofactor.

It is found in the cytoplasm. The catalysed reaction is 2-deoxy-alpha-D-ribose 1-phosphate = 2-deoxy-D-ribose 5-phosphate. It catalyses the reaction alpha-D-ribose 1-phosphate = D-ribose 5-phosphate. The protein operates within carbohydrate degradation; 2-deoxy-D-ribose 1-phosphate degradation; D-glyceraldehyde 3-phosphate and acetaldehyde from 2-deoxy-alpha-D-ribose 1-phosphate: step 1/2. Its function is as follows. Isomerase that catalyzes the conversion of deoxy-ribose 1-phosphate (dRib-1-P) and ribose 1-phosphate (Rib-1-P) to deoxy-ribose 5-phosphate (dRib-5-P) and ribose 5-phosphate (Rib-5-P), respectively. In Lactococcus lactis subsp. lactis (strain IL1403) (Streptococcus lactis), this protein is Phosphopentomutase.